Here is a 346-residue protein sequence, read N- to C-terminus: Insertion element IS476 uncharacterized 39.2 kDa protein (346 aa).

The interval 1–50 is disordered; it reads MVSARPAFISGGPSTGGWRPTRQAAERTGGPEHSIEEVAGRGAPGHRSAE. The span at 29–39 shows a compositional bias: basic and acidic residues; sequence GGPEHSIEEVA. Positions 169 to 329 constitute an Integrase catalytic domain; sequence ASSMPNDTWS…IPPAQFAANY (161 aa).

This Xanthomonas euvesicatoria protein is Insertion element IS476 uncharacterized 39.2 kDa protein.